The sequence spans 151 residues: Cell division protein SepF (151 aa).

Positions 31-53 are disordered; that stretch reads EEVEEPRRRSRTGVKQERETGQN.

It belongs to the SepF family. In terms of assembly, homodimer. Interacts with FtsZ.

The protein localises to the cytoplasm. Cell division protein that is part of the divisome complex and is recruited early to the Z-ring. Probably stimulates Z-ring formation, perhaps through the cross-linking of FtsZ protofilaments. Its function overlaps with FtsA. The chain is Cell division protein SepF from Halalkalibacterium halodurans (strain ATCC BAA-125 / DSM 18197 / FERM 7344 / JCM 9153 / C-125) (Bacillus halodurans).